A 191-amino-acid chain; its full sequence is Transcription factor FapR (191 aa).

The MaoC-like domain occupies 102 to 169 (GIARGHHLFA…RILVTSHVNQ (68 aa)).

Belongs to the FapR family.

In terms of biological role, transcriptional factor involved in regulation of membrane lipid biosynthesis by repressing genes involved in fatty acid and phospholipid metabolism. The sequence is that of Transcription factor FapR from Shouchella clausii (strain KSM-K16) (Alkalihalobacillus clausii).